Reading from the N-terminus, the 85-residue chain is RNA-binding protein Hfq (85 aa).

The 61-residue stretch at 11–71 (DTFLNHVRKS…ISTIMPGHPV (61 aa)) folds into the Sm domain.

Belongs to the Hfq family. As to quaternary structure, homohexamer.

Its function is as follows. RNA chaperone that binds small regulatory RNA (sRNAs) and mRNAs to facilitate mRNA translational regulation in response to envelope stress, environmental stress and changes in metabolite concentrations. Also binds with high specificity to tRNAs. Seems to be involved in the regulation of NifA. In Azorhizobium caulinodans (strain ATCC 43989 / DSM 5975 / JCM 20966 / LMG 6465 / NBRC 14845 / NCIMB 13405 / ORS 571), this protein is RNA-binding protein Hfq.